A 205-amino-acid chain; its full sequence is Ribosomal RNA small subunit methyltransferase G (205 aa).

Residues Gly-73, Leu-78, 124–125 (VE), and Arg-138 each bind S-adenosyl-L-methionine.

It belongs to the methyltransferase superfamily. RNA methyltransferase RsmG family.

It is found in the cytoplasm. The catalysed reaction is guanosine(527) in 16S rRNA + S-adenosyl-L-methionine = N(7)-methylguanosine(527) in 16S rRNA + S-adenosyl-L-homocysteine. In terms of biological role, specifically methylates the N7 position of guanine in position 527 of 16S rRNA. This Actinobacillus pleuropneumoniae serotype 5b (strain L20) protein is Ribosomal RNA small subunit methyltransferase G.